The sequence spans 719 residues: NF-kappa-B inhibitor zeta (719 aa).

Over residues 46–81 (GACDGGCSASGPSAPGSPGSDSSDFSSASSVSSCGA) the composition is skewed to low complexity. The disordered stretch occupies residues 46–97 (GACDGGCSASGPSAPGSPGSDSSDFSSASSVSSCGAVESRPRGGARAERLQV). Residues 84 to 97 (SRPRGGARAERLQV) show a composition bias toward basic and acidic residues. The OCA domain maps to 108–130 (RGPFQGVRVKNSVKELLLHIRSH). The Nuclear localization signal signature appears at 164-179 (KRKGSDSLSDGPACKR). 2 disordered regions span residues 188–210 (LTPP…ESKQ) and 289–343 (YSPQ…FAPL). Over residues 201–210 (EDVHHNESKQ) the composition is skewed to basic and acidic residues. A required for transcriptional activity region spans residues 322-394 (SYEPHLFGRE…LARPDASSTP (73 aa)). The interaction with NFKB1/p50 stretch occupies residues 405 to 719 (GGNPMSTTQL…KSIQQRAPPY (315 aa)). 7 ANK repeats span residues 444–473 (DGDT…ALHM), 480–509 (NGQS…QVNT), 513–542 (WGRT…GSNQ), 552–581 (DGLT…HSPE), 583–608 (QELL…AVEA), 613–642 (SGRT…CLSF), and 649–682 (NGNT…DPST).

As to quaternary structure, interacts with NFKB1/p50. Interacts with RELA. Interacts with AKIRIN2.

It is found in the nucleus. Functionally, involved in regulation of NF-kappa-B transcription factor complexes. Inhibits NF-kappa-B activity without affecting its nuclear translocation upon stimulation. Inhibits DNA-binding of RELA and NFKB1/p50, and of the NF-kappa-B p65-p50 heterodimer and the NF-kappa-B p50-p50 homodimer. Also seems to activate NF-kappa-B-mediated transcription. In vitro, upon association with NFKB1/p50 has transcriptional activation activity and, together with NFKB1/p50 and RELA, is recruited to LCN2 promoters. Promotes transcription of LCN2 and DEFB4. Is recruited to IL-6 promoters and activates IL-6 but decreases TNF-alpha production in response to LPS. Seems to be involved in the induction of inflammatory genes activated through TLR/IL-1 receptor signaling. Involved in the induction of T helper 17 cells (Th17) differentiation upon recognition of antigen by T cell antigen receptor (TCR). This is NF-kappa-B inhibitor zeta (NFKBIZ) from Bos taurus (Bovine).